The chain runs to 219 residues: Octanoyltransferase (219 aa).

Residues 24 to 212 form the BPL/LPL catalytic domain; sequence KFRRECILFL…NLNSFLGPIS (189 aa). Substrate contacts are provided by residues 69–76, 140–142, and 153–155; these read RGGDFTAH, SIG, and GVA. Cys171 serves as the catalytic Acyl-thioester intermediate.

Belongs to the LipB family.

Its subcellular location is the cytoplasm. The enzyme catalyses octanoyl-[ACP] + L-lysyl-[protein] = N(6)-octanoyl-L-lysyl-[protein] + holo-[ACP] + H(+). It functions in the pathway protein modification; protein lipoylation via endogenous pathway; protein N(6)-(lipoyl)lysine from octanoyl-[acyl-carrier-protein]: step 1/2. Catalyzes the transfer of endogenously produced octanoic acid from octanoyl-acyl-carrier-protein onto the lipoyl domains of lipoate-dependent enzymes. Lipoyl-ACP can also act as a substrate although octanoyl-ACP is likely to be the physiological substrate. In Leptospira borgpetersenii serovar Hardjo-bovis (strain JB197), this protein is Octanoyltransferase.